Consider the following 255-residue polypeptide: 4-hydroxy-tetrahydrodipicolinate reductase (255 aa).

Residues 13-18 (GCNGKM), 90-92 (CTT), and 114-117 (SANM) each bind NAD(+). The Proton donor/acceptor role is filled by histidine 147. (S)-2,3,4,5-tetrahydrodipicolinate is bound at residue histidine 148. Catalysis depends on lysine 151, which acts as the Proton donor. 157-158 (GT) serves as a coordination point for (S)-2,3,4,5-tetrahydrodipicolinate.

Belongs to the DapB family.

It is found in the cytoplasm. The catalysed reaction is (S)-2,3,4,5-tetrahydrodipicolinate + NAD(+) + H2O = (2S,4S)-4-hydroxy-2,3,4,5-tetrahydrodipicolinate + NADH + H(+). The enzyme catalyses (S)-2,3,4,5-tetrahydrodipicolinate + NADP(+) + H2O = (2S,4S)-4-hydroxy-2,3,4,5-tetrahydrodipicolinate + NADPH + H(+). The protein operates within amino-acid biosynthesis; L-lysine biosynthesis via DAP pathway; (S)-tetrahydrodipicolinate from L-aspartate: step 4/4. Catalyzes the conversion of 4-hydroxy-tetrahydrodipicolinate (HTPA) to tetrahydrodipicolinate. This is 4-hydroxy-tetrahydrodipicolinate reductase from Clostridium tetani (strain Massachusetts / E88).